The chain runs to 254 residues: O-antigen biosynthesis glycosyltransferase WbnJ (254 aa).

This sequence belongs to the glycosyltransferase 2 family.

It carries out the reaction an N-acetyl-alpha-D-galactosaminyl derivative + UDP-alpha-D-galactose = a beta-D-galactosyl-(1-&gt;3)-N-acetyl-alpha-D-galactosaminyl derivative + UDP + H(+). The catalysed reaction is alpha-D-GalNAc-(1-&gt;3)-alpha-D-GalNAc-di-trans,octa-cis-undecaprenyl diphosphate + UDP-alpha-D-galactose = beta-D-Gal-(1-&gt;3)-alpha-D-GalNAc-(1-&gt;3)-alpha-D-GalNAc-di-trans,octa-cis-undecaprenyl diphosphate + UDP + H(+). The protein operates within bacterial outer membrane biogenesis; LPS O-antigen biosynthesis. Involved in the assembly of the O-repeating unit during O-antigen biosynthesis. The chain is O-antigen biosynthesis glycosyltransferase WbnJ from Escherichia coli.